Here is an 804-residue protein sequence, read N- to C-terminus: MSHADMNNCSGFNEAAAAFSWNSPKKAINPYLDLAEVAPVSALSNLITLYAADNEQEQLRREALSDQVWERYFFNESRDPVQREMEQDKFISRAKLAHEQQRFNPDMVILADVNAQPSHISRPLMQRIEYFSSLGRPKAYSRYLRETIKPCLERLEHVRDSQLSTSFRFMASHEGLDGLLILPEMSQDQVKRLSTLVAAHMSMCLDAACGDLYATDDVKPEEIRKTWEKVAAETLRLDVIPPAFEQLRRKRNRRKPVPYELIPGSLARMLCADWWYRKLWKMRCEWREEQLRAVCLVSKKASPYVSYEAMMHKREQRRKSLEFFRSHELVNEDGDTLDMEDVVNASSSNPAHRRNEMMACVKGLELIAEMRGDCAVFYTITCPSRFHSTLNNGRPNPTWTNTTVRQSSDYLVGMFAAFRKAMHKAGLRWYGVRVAEPHHDGTVHWHLLCFMRKKDRRTITALLRKFAIREDREELGNNTGPRFKSELINPRKGTPTSYIAKYISKNIDGRGLAGEISKETGKSLRDNAEYVNAWASLHRVQQFRFFGIPGRQAYRELRLLAGQAARQQGDKKAGAPVLDNPRLDAILAAADAGCFATYIMKQGGVLVPRKYHLIRTAYEINEEPTAYGDHGIRIYGIWSPIAEGKICTHAVKWKMVRKAVDVQEAAADQGACAPWTRGNNCPLAENLNQHEKDKSADGDTRTDITCMDDKELHDYLHSMGKKEHRELAARLRLVKPKRRKDHKQRITEHQRQQLVYELKSRGFDGSEKEVDLLLRGGSIPSGAGLRIFYRNQRLQEDDKWRDLY.

Catalysis depends on O-(5'-phospho-DNA)-tyrosine intermediate residues Y498 and Y502.

This sequence belongs to the phage GPA family.

Possible endonuclease which induces a single-strand cut and initiates DNA replication. This chain is Probable replication endonuclease from prophage-like region 1, found in Salmonella typhi.